Here is a 254-residue protein sequence, read N- to C-terminus: Pimeloyl-[acyl-carrier protein] methyl ester esterase (254 aa).

Residues 14–242 (LVLLHGWGMN…ASHAPFISHP (229 aa)) enclose the AB hydrolase-1 domain. Residues Trp20, 82-83 (SL), and 143-147 (FLAIQ) each bind substrate. Ser82 serves as the catalytic Nucleophile. Catalysis depends on residues Asp207 and His235. His235 is a binding site for substrate.

The protein belongs to the AB hydrolase superfamily. Carboxylesterase BioH family. As to quaternary structure, monomer.

It localises to the cytoplasm. It catalyses the reaction 6-carboxyhexanoyl-[ACP] methyl ester + H2O = 6-carboxyhexanoyl-[ACP] + methanol + H(+). The protein operates within cofactor biosynthesis; biotin biosynthesis. The physiological role of BioH is to remove the methyl group introduced by BioC when the pimeloyl moiety is complete. It allows to synthesize pimeloyl-ACP via the fatty acid synthetic pathway through the hydrolysis of the ester bonds of pimeloyl-ACP esters. In Aeromonas salmonicida (strain A449), this protein is Pimeloyl-[acyl-carrier protein] methyl ester esterase.